We begin with the raw amino-acid sequence, 271 residues long: Mannosyl-3-phosphoglycerate phosphatase (271 aa).

The Nucleophile role is filled by Asp13. Mg(2+) contacts are provided by Asp13, Asp15, and Asp214.

Belongs to the HAD-like hydrolase superfamily. MPGP family. The cofactor is Mg(2+).

It is found in the cytoplasm. It catalyses the reaction 2-O-(alpha-D-mannosyl)-3-phosphoglycerate + H2O = (2R)-2-O-(alpha-D-mannosyl)-glycerate + phosphate. The protein is Mannosyl-3-phosphoglycerate phosphatase of Escherichia coli O81 (strain ED1a).